A 190-amino-acid polypeptide reads, in one-letter code: Peptidyl-tRNA hydrolase (190 aa).

A tRNA-binding site is contributed by Phe-14. Residue His-19 is the Proton acceptor of the active site. Met-64, Asn-66, and Asn-112 together coordinate tRNA.

It belongs to the PTH family. Monomer.

It is found in the cytoplasm. It catalyses the reaction an N-acyl-L-alpha-aminoacyl-tRNA + H2O = an N-acyl-L-amino acid + a tRNA + H(+). Its function is as follows. Hydrolyzes ribosome-free peptidyl-tRNAs (with 1 or more amino acids incorporated), which drop off the ribosome during protein synthesis, or as a result of ribosome stalling. Catalyzes the release of premature peptidyl moieties from peptidyl-tRNA molecules trapped in stalled 50S ribosomal subunits, and thus maintains levels of free tRNAs and 50S ribosomes. This Staphylococcus aureus (strain Mu3 / ATCC 700698) protein is Peptidyl-tRNA hydrolase.